Reading from the N-terminus, the 115-residue chain is MTGKGQGFGFGLGKMKELADAFKKAQQVQEGAKRLQEELEQMEILGESGGGLVKVIVSGNQEPKRVEISPDALAEGAEVLSDLVTVAMKEAYNKSTATMRERMEELTSGLELPGF.

Belongs to the YbaB/EbfC family. In terms of assembly, homodimer.

Its subcellular location is the cytoplasm. The protein localises to the nucleoid. Its function is as follows. Binds to DNA and alters its conformation. May be involved in regulation of gene expression, nucleoid organization and DNA protection. This chain is Nucleoid-associated protein Npun_F0448, found in Nostoc punctiforme (strain ATCC 29133 / PCC 73102).